A 105-amino-acid chain; its full sequence is MSEDDSKKEPEPEETEAEIKHEEISREEDDEGGEFSTVTISDIEMLLKDTEIWDKLLRNELSIEEAKKMFDDVARSYSKADKKKRRVEKKPKKGKVTKKSDEEEE.

2 stretches are compositionally biased toward basic and acidic residues: residues 1–10 (MSEDDSKKEP) and 70–80 (FDDVARSYSKA). 2 disordered regions span residues 1–35 (MSEDDSKKEPEPEETEAEIKHEEISREEDDEGGEF) and 70–105 (FDDVARSYSKADKKKRRVEKKPKKGKVTKKSDEEEE). The segment covering 81 to 97 (DKKKRRVEKKPKKGKVT) has biased composition (basic residues).

It belongs to the archaeal Rpo13 RNA polymerase subunit family. Part of the 13-subunit RNA polymerase.

It localises to the cytoplasm. The enzyme catalyses RNA(n) + a ribonucleoside 5'-triphosphate = RNA(n+1) + diphosphate. Functionally, DNA-dependent RNA polymerase catalyzes the transcription of DNA into RNA using the four ribonucleoside triphosphates as substrates. In vitro binds dsDNA but not ssDNA. In Sulfolobus acidocaldarius (strain ATCC 33909 / DSM 639 / JCM 8929 / NBRC 15157 / NCIMB 11770), this protein is DNA-directed RNA polymerase subunit Rpo13.